The sequence spans 393 residues: Formate-dependent phosphoribosylglycinamide formyltransferase (393 aa).

N(1)-(5-phospho-beta-D-ribosyl)glycinamide-binding positions include 22-23 (EL) and Glu-82. ATP-binding positions include Arg-114, Lys-155, 160–165 (SSGKGQ), 195–198 (EGLV), and Glu-203. Positions 119 to 308 (RLAAETLQLP…EFALHVRAFL (190 aa)) constitute an ATP-grasp domain. Mg(2+) is bound by residues Glu-267 and Glu-279. N(1)-(5-phospho-beta-D-ribosyl)glycinamide is bound by residues Asp-286, Lys-355, and 362-363 (RR).

The protein belongs to the PurK/PurT family. In terms of assembly, homodimer.

It catalyses the reaction N(1)-(5-phospho-beta-D-ribosyl)glycinamide + formate + ATP = N(2)-formyl-N(1)-(5-phospho-beta-D-ribosyl)glycinamide + ADP + phosphate + H(+). Its pathway is purine metabolism; IMP biosynthesis via de novo pathway; N(2)-formyl-N(1)-(5-phospho-D-ribosyl)glycinamide from N(1)-(5-phospho-D-ribosyl)glycinamide (formate route): step 1/1. In terms of biological role, involved in the de novo purine biosynthesis. Catalyzes the transfer of formate to 5-phospho-ribosyl-glycinamide (GAR), producing 5-phospho-ribosyl-N-formylglycinamide (FGAR). Formate is provided by PurU via hydrolysis of 10-formyl-tetrahydrofolate. This is Formate-dependent phosphoribosylglycinamide formyltransferase from Yersinia pseudotuberculosis serotype O:3 (strain YPIII).